Here is a 229-residue protein sequence, read N- to C-terminus: tRNA (guanine-N(7)-)-methyltransferase (229 aa).

Positions 62, 87, 114, and 137 each coordinate S-adenosyl-L-methionine. Residue Asp-137 is part of the active site. Substrate is bound at residue Lys-141. The segment at 143-148 (KHNKRR) is interaction with RNA. Substrate-binding positions include Asp-173 and 208–211 (TKFE).

It belongs to the class I-like SAM-binding methyltransferase superfamily. TrmB family.

It carries out the reaction guanosine(46) in tRNA + S-adenosyl-L-methionine = N(7)-methylguanosine(46) in tRNA + S-adenosyl-L-homocysteine. Its pathway is tRNA modification; N(7)-methylguanine-tRNA biosynthesis. Catalyzes the formation of N(7)-methylguanine at position 46 (m7G46) in tRNA. This is tRNA (guanine-N(7)-)-methyltransferase from Francisella tularensis subsp. novicida (strain U112).